Consider the following 281-residue polypeptide: Apolipoprotein Eb (281 aa).

The signal sequence occupies residues 1–18 (MRSLVVFFALAVLTGCQA). A propeptide spanning residues 19 to 24 (RSLFQA) is cleaved from the precursor. Residues 34-66 (MVDRFWQYVSELNTQTDGMVQNIKGSQLSRELD) are 3 X approximate tandem repeats. 9 consecutive repeat copies span residues 67-88 (TLITDTMAELSSYSENLQTQMT), 89-110 (PYASDAAGQLSKDLQLLAGKLQ), 111-132 (TDMTDAKERSTQYLQELKTMME), 133-154 (QNADDVKNRVGTYTRKLKKRLN), 155-176 (KDTEEIRNTVATYMSEMQSRAS), 177-199 (QNADAVKDRFQPYMSQAQDGATQ), 200-227 (KLGAISELMKAQAQEVSEQLEVQAGALK), 228-249 (EKLEETAENLRTSLEGRVDELT), and 254-281 (PYSQKIREQLQEVMDKIKEATAALPTQA). A 9 X 22 AA approximate tandem repeats region spans residues 67 to 281 (TLITDTMAEL…EATAALPTQA (215 aa)).

The protein belongs to the apolipoprotein A1/A4/E family. As to quaternary structure, homotetramer.

It localises to the secreted. Its subcellular location is the extracellular space. The protein resides in the extracellular matrix. APOE is an apolipoprotein, a protein associating with lipid particles, that mainly functions in lipoprotein-mediated lipid transport between organs via the plasma and interstitial fluids. APOE is a core component of plasma lipoproteins and is involved in their production, conversion and clearance. Apolipoproteins are amphipathic molecules that interact both with lipids of the lipoprotein particle core and the aqueous environment of the plasma. The polypeptide is Apolipoprotein Eb (apoeb) (Danio rerio (Zebrafish)).